Consider the following 255-residue polypeptide: Type III pantothenate kinase (255 aa).

Asp6–Asp13 lines the ATP pocket. Position 107-110 (Gly107–Leu110) interacts with substrate. Asp109 serves as the catalytic Proton acceptor. Asp129 is a K(+) binding site. An ATP-binding site is contributed by Thr132. Thr183 contacts substrate.

The protein belongs to the type III pantothenate kinase family. Homodimer. NH4(+) is required as a cofactor. K(+) serves as cofactor.

The protein localises to the cytoplasm. It catalyses the reaction (R)-pantothenate + ATP = (R)-4'-phosphopantothenate + ADP + H(+). It participates in cofactor biosynthesis; coenzyme A biosynthesis; CoA from (R)-pantothenate: step 1/5. Its function is as follows. Catalyzes the phosphorylation of pantothenate (Pan), the first step in CoA biosynthesis. The polypeptide is Type III pantothenate kinase (Dictyoglomus turgidum (strain DSM 6724 / Z-1310)).